Consider the following 310-residue polypeptide: MAKVTANDLLEKFQFELLAGEEGIYRPITTSDISRPGIEMAGFFTYYPARRLQLIGRTELSFLKSLSDQEKEERMTKLCTYDTPGIILSRGLEAPEQLIAAADKRGVPVLRSTLTTTQLSSRVTNFLESELAPVTAVHGVLVDIYGIGVLITGGSGVGKSETALDLVRRGHRLVADDSVEIRQQNEDTLVGYPPPLLQHLLEIRGLGIINVMTLFGAGAVRPFKRISLCMNLELWDQTKAYDRLGLEEDKMKIFDTEITKMTVPVRPGRNLAVIIEVAAMNFRLKRLGFNAAQEFSERLTQVIEHGENEF.

Active-site residues include H138 and K159. Position 153 to 160 (153 to 160 (GGSGVGKS)) interacts with ATP. Residue S160 participates in Mg(2+) binding. The Proton acceptor; for phosphorylation activity. Proton donor; for dephosphorylation activity role is filled by D177. Positions 201-210 (LEIRGLGIIN) are important for the catalytic mechanism of both phosphorylation and dephosphorylation. E202 serves as a coordination point for Mg(2+). Residue R243 is part of the active site. An important for the catalytic mechanism of dephosphorylation region spans residues 264 to 269 (PVRPGR).

It belongs to the HPrK/P family. As to quaternary structure, homohexamer. The cofactor is Mg(2+).

It carries out the reaction [HPr protein]-L-serine + ATP = [HPr protein]-O-phospho-L-serine + ADP + H(+). The catalysed reaction is [HPr protein]-O-phospho-L-serine + phosphate + H(+) = [HPr protein]-L-serine + diphosphate. In terms of biological role, catalyzes the ATP- as well as the pyrophosphate-dependent phosphorylation of a specific serine residue in HPr, a phosphocarrier protein of the phosphoenolpyruvate-dependent sugar phosphotransferase system (PTS). HprK/P also catalyzes the pyrophosphate-producing, inorganic phosphate-dependent dephosphorylation (phosphorolysis) of seryl-phosphorylated HPr (P-Ser-HPr). The two antagonistic activities of HprK/P are regulated by several intracellular metabolites, which change their concentration in response to the absence or presence of rapidly metabolisable carbon sources (glucose, fructose, etc.) in the growth medium. Also phosphorylates/dephosphorylates the HPr-like catabolite repression protein crh on a specific serine residue. Therefore, by controlling the phosphorylation state of HPr and crh, HPrK/P is a sensor enzyme that plays a major role in the regulation of carbon metabolism and sugar transport: it mediates carbon catabolite repression (CCR), and regulates PTS-catalyzed carbohydrate uptake and inducer exclusion. This is HPr kinase/phosphorylase from Shouchella clausii (strain KSM-K16) (Alkalihalobacillus clausii).